A 235-amino-acid chain; its full sequence is Matrix protein (235 aa).

It belongs to the nucleorhabdovirus type-2 matrix protein family. In terms of assembly, homomultimer. Interacts with nucleoprotein and with the cytoplasmic domain of glycoprotein.

It localises to the virion membrane. The protein resides in the host endomembrane system. Functionally, plays a major role in assembly and budding of virion. Completely covers the ribonucleoprotein coil and keep it in condensed bullet-shaped form. Inhibits viral transcription and stimulates replication. This is Matrix protein (M) from Colocasia esculenta (Wild taro).